Consider the following 138-residue polypeptide: Large ribosomal subunit protein bL17 (138 aa).

Belongs to the bacterial ribosomal protein bL17 family. As to quaternary structure, part of the 50S ribosomal subunit. Contacts protein L32.

This chain is Large ribosomal subunit protein bL17, found in Dinoroseobacter shibae (strain DSM 16493 / NCIMB 14021 / DFL 12).